The primary structure comprises 477 residues: Glycogen synthase (477 aa).

Lysine 15 contributes to the ADP-alpha-D-glucose binding site.

Belongs to the glycosyltransferase 1 family. Bacterial/plant glycogen synthase subfamily.

It carries out the reaction [(1-&gt;4)-alpha-D-glucosyl](n) + ADP-alpha-D-glucose = [(1-&gt;4)-alpha-D-glucosyl](n+1) + ADP + H(+). It participates in glycan biosynthesis; glycogen biosynthesis. Functionally, synthesizes alpha-1,4-glucan chains using ADP-glucose. In Shigella flexneri, this protein is Glycogen synthase.